Consider the following 330-residue polypeptide: DNA-directed RNA polymerase subunit alpha (330 aa).

The segment at methionine 1–glutamate 231 is alpha N-terminal domain (alpha-NTD). An alpha C-terminal domain (alpha-CTD) region spans residues methionine 253–glutamate 330.

The protein belongs to the RNA polymerase alpha chain family. Homodimer. The RNAP catalytic core consists of 2 alpha, 1 beta, 1 beta' and 1 omega subunit. When a sigma factor is associated with the core the holoenzyme is formed, which can initiate transcription.

The enzyme catalyses RNA(n) + a ribonucleoside 5'-triphosphate = RNA(n+1) + diphosphate. DNA-dependent RNA polymerase catalyzes the transcription of DNA into RNA using the four ribonucleoside triphosphates as substrates. This chain is DNA-directed RNA polymerase subunit alpha, found in Flavobacterium psychrophilum (strain ATCC 49511 / DSM 21280 / CIP 103535 / JIP02/86).